Consider the following 123-residue polypeptide: Large ribosomal subunit protein uL29 (123 aa).

It belongs to the universal ribosomal protein uL29 family. In terms of assembly, component of the large ribosomal subunit.

It localises to the cytoplasm. Component of the large ribosomal subunit. The ribosome is a large ribonucleoprotein complex responsible for the synthesis of proteins in the cell. In Hippocampus comes (Tiger tail seahorse), this protein is Large ribosomal subunit protein uL29 (rpl35).